A 211-amino-acid chain; its full sequence is Thiamine-phosphate synthase (211 aa).

Residues 37–41 (QLRIK) and Asn-69 contribute to the 4-amino-2-methyl-5-(diphosphooxymethyl)pyrimidine site. The Mg(2+) site is built by Asp-70 and Asp-89. Ser-108 is a 4-amino-2-methyl-5-(diphosphooxymethyl)pyrimidine binding site. 2-[(2R,5Z)-2-carboxy-4-methylthiazol-5(2H)-ylidene]ethyl phosphate is bound at residue 134 to 136 (TQT). Residue Lys-137 participates in 4-amino-2-methyl-5-(diphosphooxymethyl)pyrimidine binding. Residues Gly-166 and 186 to 187 (VS) each bind 2-[(2R,5Z)-2-carboxy-4-methylthiazol-5(2H)-ylidene]ethyl phosphate.

It belongs to the thiamine-phosphate synthase family. Mg(2+) is required as a cofactor.

It catalyses the reaction 2-[(2R,5Z)-2-carboxy-4-methylthiazol-5(2H)-ylidene]ethyl phosphate + 4-amino-2-methyl-5-(diphosphooxymethyl)pyrimidine + 2 H(+) = thiamine phosphate + CO2 + diphosphate. The enzyme catalyses 2-(2-carboxy-4-methylthiazol-5-yl)ethyl phosphate + 4-amino-2-methyl-5-(diphosphooxymethyl)pyrimidine + 2 H(+) = thiamine phosphate + CO2 + diphosphate. The catalysed reaction is 4-methyl-5-(2-phosphooxyethyl)-thiazole + 4-amino-2-methyl-5-(diphosphooxymethyl)pyrimidine + H(+) = thiamine phosphate + diphosphate. It participates in cofactor biosynthesis; thiamine diphosphate biosynthesis; thiamine phosphate from 4-amino-2-methyl-5-diphosphomethylpyrimidine and 4-methyl-5-(2-phosphoethyl)-thiazole: step 1/1. Its function is as follows. Condenses 4-methyl-5-(beta-hydroxyethyl)thiazole monophosphate (THZ-P) and 2-methyl-4-amino-5-hydroxymethyl pyrimidine pyrophosphate (HMP-PP) to form thiamine monophosphate (TMP). This is Thiamine-phosphate synthase from Escherichia coli O139:H28 (strain E24377A / ETEC).